Reading from the N-terminus, the 563-residue chain is Grainyhead-like protein 1 homolog (563 aa).

Positions 194–428 constitute a Grh/CP2 DB domain; the sequence is NNLGFQYVLE…ELDKPAALFI (235 aa). Interaction with DNA stretches follow at residues 326–335 and 372–375; these read TDFSTQKGVK and RKLR. Residues 377-405 are disordered; that stretch reads EDKRAQKRKVQEYTAGALPGGRKKSDGEY.

Belongs to the grh/CP2 family. Grainyhead subfamily.

Its subcellular location is the nucleus. Probable transcription factor. Binds a motif with the core sequence 5'-C[ACT][TG]G-3' in regulatory elements of target genes. Many putative target genes show oscillating expression levels, perhaps as a result of rhythmic variation in accumulation of grh-1. Plays a role in proper cuticle formation and/or barrier function and is required repetitively during development, for successful completion of each molt. Involved in modulating lifespan. Plays a role in defense response to bacteria. May act upstream of the p38 MAP kinase / pmk-1 pathway. May act downstream of the insulin/IGF-1 receptor signaling (IIS) pathway. This Caenorhabditis elegans protein is Grainyhead-like protein 1 homolog.